The following is a 338-amino-acid chain: Ketol-acid reductoisomerase (NADP(+)) (338 aa).

A KARI N-terminal Rossmann domain is found at 1–181 (MKVYYDKDAD…GGGKAGIIET (181 aa)). NADP(+) is bound by residues 24-27 (YGSQ), Arg-47, and Ser-52. His-107 is a catalytic residue. NADP(+) is bound at residue Gly-133. The region spanning 182–327 (NFREETETDL…EKLRAMMPWI (146 aa)) is the KARI C-terminal knotted domain. Mg(2+)-binding residues include Asp-190, Glu-194, Glu-226, and Glu-230. Ser-251 contributes to the substrate binding site.

The protein belongs to the ketol-acid reductoisomerase family. Mg(2+) is required as a cofactor.

The catalysed reaction is (2R)-2,3-dihydroxy-3-methylbutanoate + NADP(+) = (2S)-2-acetolactate + NADPH + H(+). The enzyme catalyses (2R,3R)-2,3-dihydroxy-3-methylpentanoate + NADP(+) = (S)-2-ethyl-2-hydroxy-3-oxobutanoate + NADPH + H(+). It functions in the pathway amino-acid biosynthesis; L-isoleucine biosynthesis; L-isoleucine from 2-oxobutanoate: step 2/4. The protein operates within amino-acid biosynthesis; L-valine biosynthesis; L-valine from pyruvate: step 2/4. Involved in the biosynthesis of branched-chain amino acids (BCAA). Catalyzes an alkyl-migration followed by a ketol-acid reduction of (S)-2-acetolactate (S2AL) to yield (R)-2,3-dihydroxy-isovalerate. In the isomerase reaction, S2AL is rearranged via a Mg-dependent methyl migration to produce 3-hydroxy-3-methyl-2-ketobutyrate (HMKB). In the reductase reaction, this 2-ketoacid undergoes a metal-dependent reduction by NADPH to yield (R)-2,3-dihydroxy-isovalerate. The chain is Ketol-acid reductoisomerase (NADP(+)) from Methylibium petroleiphilum (strain ATCC BAA-1232 / LMG 22953 / PM1).